We begin with the raw amino-acid sequence, 442 residues long: MENAKMNSLIAQYPLVEDLVALKETTWFNPGTTSLAEGLPYVGLTEQDVQDAHARLSRFAPYLAKAFPETAAAGGIIESELVAIPAMQKRLEKEYHQPIAGQLLLKKDSHLPISGSIKARGGIYEVLAHAEKLALEAGLLTLEDDYSKLLSPEFKQFFSQYSIAVGSTGNLGLSIGIMSARIGFKVTVHMSADARAWKKAKLRSHGVTVVEYEQDYGVAVEEGRKAAQSDPNCFFIDDENSRTLFLGYSVAGQRLKAQFAQQGRIVNADNPLFVYLPCGVGGGPGGVAFGLKLAFGDHVHCFFAEPTHSPCMLLGVHTGLHDQISVQDIGIDNLTAADGLAVGRASGFVGRAMERLLDGFYTLSDQTMYDMLSWLAQEEGIRLEPSALAGMAGPQRVCASVSYQQMHGFSAEQLRNATHLVWATGGGMVPEEEMNQYLAKGR.

Position 118 is an N6-(pyridoxal phosphate)lysine (Lys-118).

It belongs to the serine/threonine dehydratase family. DsdA subfamily. In terms of assembly, monomer. Requires pyridoxal 5'-phosphate as cofactor.

It catalyses the reaction D-serine = pyruvate + NH4(+). The sequence is that of D-serine dehydratase 1 from Escherichia coli (strain UTI89 / UPEC).